The chain runs to 146 residues: MATALKKNRKKRGHVSAGHGRIGKHRKHPGGRGNAGGMHHHRILFDKYHPGYFGKVGMRYFHKLRNKFFCPIVNLDKLWSLVPEDVKAKSSKDNVPLIDVTQHGFFKVLGKGHLPENKPFVVKAKLISKTAEKKIKEAGGAVVLTA.

Basic residues-rich tracts occupy residues 1–14 (MATA…KRGH) and 21–30 (RIGKHRKHPG). The tract at residues 1 to 38 (MATALKKNRKKRGHVSAGHGRIGKHRKHPGGRGNAGGM) is disordered.

The protein belongs to the universal ribosomal protein uL15 family.

This chain is Large ribosomal subunit protein uL15y (RPL27AB), found in Arabidopsis thaliana (Mouse-ear cress).